We begin with the raw amino-acid sequence, 373 residues long: Chorismate synthase (373 aa).

Arginine 46 is a binding site for NADP(+). FMN-binding positions include 123 to 125 (RSS), 251 to 252 (NA), glycine 295, 310 to 314 (KPTPS), and arginine 337.

This sequence belongs to the chorismate synthase family. FMNH2 is required as a cofactor.

The enzyme catalyses 5-O-(1-carboxyvinyl)-3-phosphoshikimate = chorismate + phosphate. It participates in metabolic intermediate biosynthesis; chorismate biosynthesis; chorismate from D-erythrose 4-phosphate and phosphoenolpyruvate: step 7/7. Functionally, catalyzes the anti-1,4-elimination of the C-3 phosphate and the C-6 proR hydrogen from 5-enolpyruvylshikimate-3-phosphate (EPSP) to yield chorismate, which is the branch point compound that serves as the starting substrate for the three terminal pathways of aromatic amino acid biosynthesis. This reaction introduces a second double bond into the aromatic ring system. The chain is Chorismate synthase from Methanococcus maripaludis (strain C7 / ATCC BAA-1331).